The chain runs to 562 residues: MDPQPPPPAQGSPPHRGRGRGRGRGRGRGRGRGRGGAGAPRAPLPCPTCGRLFRFPYYLSRHRLSHSGLRPHACPLCPKAFRRPAHLSRHLRGHGPQPPLRCAACPRTFPEPAQLRRHLAQEHAGGEVELAIERVAKETAEPSWGPQDEGSEPPTTAAAGATEEEAVAAWPETWPAGEPSTLAAPTSAAEPRESESEEAEAGAAELRAELALAAGRQEEKQVLLQADWTLLCLRCREAFATKGELKAHPCLRPEGEQEGEGGPPPRPKRHQCSICLKAFARPWSLSRHRLVHSTDRPFVCPDCGLAFRLASYLRQHRRVHGPLSLLAPLPAAGKKDDKASGARNSAKGPEGGEGAECGGASEGGEGQNGGDAAPARPPAGEPRFWCPECGKGFRRRAHLRQHGVTHSGARPFQCVRCQREFKRLADLARHAQVHAGGPAPHPCPRCPRRFSRAYSLLRHQRCHRAELERAAALQALQAQAPTSPPPPPPPLKAEQEEEGLPLPLANIKEEPPSPGTPPQSPPAPPVFLSASCFDSQDHSAFEMEEEEVDSKAHLRGLGGLAS.

Residues 1–11 are compositionally biased toward pro residues; that stretch reads MDPQPPPPAQG. Residues 1–43 form a disordered region; sequence MDPQPPPPAQGSPPHRGRGRGRGRGRGRGRGRGRGGAGAPRAP. The segment covering 15 to 33 has biased composition (basic residues); that stretch reads HRGRGRGRGRGRGRGRGRG. C2H2-type zinc fingers lie at residues 44-66, 72-94, and 100-123; these read LPCPTCGRLFRFPYYLSRHRLSH, HACPLCPKAFRRPAHLSRHLRGH, and LRCAACPRTFPEPAQLRRHLAQEH. An Omega-N-methylarginine modification is found at R92. Residues 139-203 are disordered; it reads TAEPSWGPQD…SESEEAEAGA (65 aa). S194 and S196 each carry phosphoserine. C2H2-type zinc fingers lie at residues 270–292 and 298–320; these read HQCSICLKAFARPWSLSRHRLVH and FVCPDCGLAFRLASYLRQHRRVH. A disordered region spans residues 327–379; sequence APLPAAGKKDDKASGARNSAKGPEGGEGAECGGASEGGEGQNGGDAAPARPPA. Residues 349–369 are compositionally biased toward gly residues; the sequence is PEGGEGAECGGASEGGEGQNG. 3 C2H2-type zinc fingers span residues 384 to 406, 412 to 434, and 441 to 463; these read FWCPECGKGFRRRAHLRQHGVTH, FQCVRCQREFKRLADLARHAQVH, and HPCPRCPRRFSRAYSLLRHQRCH. The tract at residues 477-562 is disordered; that stretch reads QAQAPTSPPP…HLRGLGGLAS (86 aa). Pro residues-rich tracts occupy residues 482 to 491 and 512 to 525; these read TSPPPPPPPL and PSPGTPPQSPPAPP. S483 bears the Phosphoserine mark.

It belongs to the krueppel C2H2-type zinc-finger protein family.

It localises to the nucleus. Its function is as follows. May be involved in transcriptional regulation. The sequence is that of Zinc finger protein 579 (ZNF579) from Homo sapiens (Human).